The primary structure comprises 230 residues: Transmembrane protein 221 (230 aa).

The next 4 membrane-spanning stretches (helical) occupy residues 12–32 (AMTL…QLLF), 73–93 (ALAA…ALCG), 125–145 (LFCC…LLLF), and 147–167 (IEAG…LVAI). The disordered stretch occupies residues 184-230 (RELSPPSFEDEPARPSEDSKSGCRAQPPQDEETETPIGAVTHQGSHF). Residues 194 to 204 (EPARPSEDSKS) show a composition bias toward basic and acidic residues.

It localises to the membrane. The protein is Transmembrane protein 221 (Tmem221) of Mus musculus (Mouse).